The following is a 210-amino-acid chain: NDR1/HIN1-like protein 12 (210 aa).

A helical membrane pass occupies residues 23–43; sequence GVIIGFIIIVLITIFLVWIIL. Residue asparagine 61 is glycosylated (N-linked (GlcNAc...) asparagine).

As to quaternary structure, may form oligomers or be a component of larger protein complex in plasma membranes. Expressed in leaves, stems and flowers, and, to a lower extent, in siliques and roots.

Its subcellular location is the cell membrane. May play a role in plant immunity. This Arabidopsis thaliana (Mouse-ear cress) protein is NDR1/HIN1-like protein 12.